Reading from the N-terminus, the 89-residue chain is Small ribosomal subunit protein uS15 (89 aa).

The protein belongs to the universal ribosomal protein uS15 family. As to quaternary structure, part of the 30S ribosomal subunit. Forms a bridge to the 50S subunit in the 70S ribosome, contacting the 23S rRNA.

Its function is as follows. One of the primary rRNA binding proteins, it binds directly to 16S rRNA where it helps nucleate assembly of the platform of the 30S subunit by binding and bridging several RNA helices of the 16S rRNA. Forms an intersubunit bridge (bridge B4) with the 23S rRNA of the 50S subunit in the ribosome. The chain is Small ribosomal subunit protein uS15 from Azotobacter vinelandii (strain DJ / ATCC BAA-1303).